The following is a 308-amino-acid chain: 4-hydroxy-3-methylbut-2-enyl diphosphate reductase 2 (308 aa).

Cys-12 is a binding site for [4Fe-4S] cluster. (2E)-4-hydroxy-3-methylbut-2-enyl diphosphate is bound by residues His-41 and His-74. 2 residues coordinate dimethylallyl diphosphate: His-41 and His-74. 2 residues coordinate isopentenyl diphosphate: His-41 and His-74. Cys-96 is a binding site for [4Fe-4S] cluster. His-124 is a (2E)-4-hydroxy-3-methylbut-2-enyl diphosphate binding site. A dimethylallyl diphosphate-binding site is contributed by His-124. Residue His-124 coordinates isopentenyl diphosphate. The active-site Proton donor is the Glu-126. (2E)-4-hydroxy-3-methylbut-2-enyl diphosphate is bound at residue Thr-164. Cys-194 serves as a coordination point for [4Fe-4S] cluster. Residues Ser-222, Ser-223, Asn-224, and Ser-266 each contribute to the (2E)-4-hydroxy-3-methylbut-2-enyl diphosphate site. 4 residues coordinate dimethylallyl diphosphate: Ser-222, Ser-223, Asn-224, and Ser-266. Positions 222, 223, 224, and 266 each coordinate isopentenyl diphosphate.

This sequence belongs to the IspH family. [4Fe-4S] cluster serves as cofactor.

The catalysed reaction is isopentenyl diphosphate + 2 oxidized [2Fe-2S]-[ferredoxin] + H2O = (2E)-4-hydroxy-3-methylbut-2-enyl diphosphate + 2 reduced [2Fe-2S]-[ferredoxin] + 2 H(+). It carries out the reaction dimethylallyl diphosphate + 2 oxidized [2Fe-2S]-[ferredoxin] + H2O = (2E)-4-hydroxy-3-methylbut-2-enyl diphosphate + 2 reduced [2Fe-2S]-[ferredoxin] + 2 H(+). The protein operates within isoprenoid biosynthesis; dimethylallyl diphosphate biosynthesis; dimethylallyl diphosphate from (2E)-4-hydroxy-3-methylbutenyl diphosphate: step 1/1. It participates in isoprenoid biosynthesis; isopentenyl diphosphate biosynthesis via DXP pathway; isopentenyl diphosphate from 1-deoxy-D-xylulose 5-phosphate: step 6/6. In terms of biological role, catalyzes the conversion of 1-hydroxy-2-methyl-2-(E)-butenyl 4-diphosphate (HMBPP) into a mixture of isopentenyl diphosphate (IPP) and dimethylallyl diphosphate (DMAPP). Acts in the terminal step of the DOXP/MEP pathway for isoprenoid precursor biosynthesis. This is 4-hydroxy-3-methylbut-2-enyl diphosphate reductase 2 from Bradyrhizobium diazoefficiens (strain JCM 10833 / BCRC 13528 / IAM 13628 / NBRC 14792 / USDA 110).